The sequence spans 389 residues: Putative teichuronic acid biosynthesis glycosyltransferase TuaC (389 aa).

This sequence belongs to the glycosyltransferase group 1 family. Glycosyltransferase 4 subfamily.

The protein operates within cell wall biogenesis; teichuronic acid biosynthesis. In Bacillus subtilis (strain 168), this protein is Putative teichuronic acid biosynthesis glycosyltransferase TuaC (tuaC).